Reading from the N-terminus, the 404-residue chain is MSRRSSRLQAKQQPQASQTDSPQEAQIIQAKKRKTAQDVKKRKEEVTKKHQYEIRNCWPPVLSGGISPCIIIETPHKEIGTSDFSRFTNYRFKNLFINPSPLPDLSWGCSQDVWLNMLKKETRYVHDKHFEVLHSELEPQMRSILLDWLLEVCEVYTLHRETFYLAQDFFDRFMLTQKDINKNMLQLIGITSLFIASKLEEIYAPKLQEFAYVTDGACSEEDILRMELAILKALKWELCPVTVISWLNLFLQVDALKDAPKVLLPQYSQEKFIQIAQLLDLCILAIDSLEFQYRILAAAALCHFTSIEVVKKASGLEWDNISECVDWMVPFVSVVKSTSPAKLKIFKKISMEDRHNIQTHTNYLAMLDEVNYVNTFRKEGQLSPVCNGGIMTPPKSTEKPPGKH.

Residues M1–E45 form a disordered region. Polar residues predominate over residues R7–Q26. A Phosphoserine modification is found at S21. Over residues T35 to E45 the composition is skewed to basic and acidic residues. K348 carries the post-translational modification N6-lactoyllysine. S383 is modified (phosphoserine). T392 carries the post-translational modification Phosphothreonine.

This sequence belongs to the cyclin family. Cyclin E subfamily. As to quaternary structure, interacts with the CDK2 (in vivo) and CDK3 (in vitro) protein kinases to form a serine/threonine kinase holoenzyme complex. The cyclin subunit imparts substrate specificity to the complex. Phosphorylation by CDK2 triggers its release from CDK2 and degradation via the ubiquitin proteasome pathway. Post-translationally, lactylated at Lys-348. Delactylated by SIRT3.

It is found in the nucleus. Its function is as follows. Essential for the control of the cell cycle at the late G1 and early S phase. In Bos taurus (Bovine), this protein is G1/S-specific cyclin-E2 (CCNE2).